Here is an 85-residue protein sequence, read N- to C-terminus: Large ribosomal subunit protein bL27 (85 aa).

The tract at residues 1–21 (MAHKKAGGSSRNGRDSEAKRL) is disordered.

This sequence belongs to the bacterial ribosomal protein bL27 family.

In Aeromonas hydrophila subsp. hydrophila (strain ATCC 7966 / DSM 30187 / BCRC 13018 / CCUG 14551 / JCM 1027 / KCTC 2358 / NCIMB 9240 / NCTC 8049), this protein is Large ribosomal subunit protein bL27.